The chain runs to 308 residues: tRNA pseudouridine synthase B (308 aa).

Residue Asp49 is the Nucleophile of the active site.

Belongs to the pseudouridine synthase TruB family. Type 1 subfamily.

The enzyme catalyses uridine(55) in tRNA = pseudouridine(55) in tRNA. Its function is as follows. Responsible for synthesis of pseudouridine from uracil-55 in the psi GC loop of transfer RNAs. The polypeptide is tRNA pseudouridine synthase B (Corynebacterium jeikeium (strain K411)).